We begin with the raw amino-acid sequence, 162 residues long: Caveolin-2 (162 aa).

The Cytoplasmic segment spans residues 1–86; that stretch reads MGLETEKADV…FEISKYVIYK (86 aa). Position 19 is a phosphotyrosine; by SRC (Y19). A phosphoserine mark is found at S20 and S23. At Y27 the chain carries Phosphotyrosine; by SRC. Position 36 is a phosphoserine (S36). An intramembrane region (helical) is located at residues 87–107; sequence FLTFFLAIPMAFAAGILFAIL. The Cytoplasmic segment spans residues 108-162; it reads SCLHIWIIMPFVKTCLMVLPSVQTIWKTITDVVIAPLCTSVGRSFSSISLQLSHD.

The protein belongs to the caveolin family. In terms of assembly, monomer or homodimer. Interacts with CAV1; the interaction forms a stable heterooligomeric complex that is required for targeting to lipid rafts and for caveolae formation. Tyrosine phosphorylated forms do not form heterooligomers with the Tyr-19-phosphorylated form existing as a monomer or dimer, and the Tyr-27-form as a monomer only. Interacts (tyrosine phosphorylated form) with the SH2 domain-containing proteins, RASA1, NCK1 and SRC. Interacts (tyrosine phosphorylated form) with INSR, the interaction (Tyr-27-phosphorylated form) is increased on insulin stimulation. Interacts (Tyr-19 phosphorylated form) with MAPK1 (phosphorylated form); the interaction, promoted by insulin, leads to nuclear location and MAPK1 activation. Interacts with STAT3; the interaction is increased on insulin-induced tyrosine phosphorylation leading to STAT activation. Phosphorylated on serine and tyrosine residues. CAV1 promotes phosphorylation on Ser-23 which then targets the complex to the plasma membrane, lipid rafts and caveolae. Phosphorylation on Ser-36 appears to modulate mitosis in endothelial cells. Phosphorylation on both Tyr-19 and Tyr-27 is required for insulin-induced 'Ser-727' phosphorylation of STAT3 and its activation. Phosphorylation on Tyr-19 is required for insulin-induced phosphorylation of MAPK1 and DNA binding of STAT3. Tyrosine phosphorylation is induced by both EGF and insulin (By. similarity).

The protein resides in the nucleus. The protein localises to the cytoplasm. It localises to the golgi apparatus membrane. Its subcellular location is the cell membrane. It is found in the membrane. The protein resides in the caveola. Its function is as follows. May act as a scaffolding protein within caveolar membranes. Interacts directly with G-protein alpha subunits and can functionally regulate their activity. Acts as an accessory protein in conjunction with CAV1 in targeting to lipid rafts and driving caveolae formation. The Ser-36 phosphorylated form has a role in modulating mitosis in endothelial cells. Positive regulator of cellular mitogenesis of the MAPK signaling pathway. Required for the insulin-stimulated nuclear translocation and activation of MAPK1 and STAT3, and the subsequent regulation of cell cycle progression. The chain is Caveolin-2 (CAV2) from Mustela putorius furo (European domestic ferret).